The chain runs to 954 residues: Glycine dehydrogenase (decarboxylating) (954 aa).

An N6-(pyridoxal phosphate)lysine modification is found at Lys704.

Belongs to the GcvP family. In terms of assembly, the glycine cleavage system is composed of four proteins: P, T, L and H. The cofactor is pyridoxal 5'-phosphate.

It carries out the reaction N(6)-[(R)-lipoyl]-L-lysyl-[glycine-cleavage complex H protein] + glycine + H(+) = N(6)-[(R)-S(8)-aminomethyldihydrolipoyl]-L-lysyl-[glycine-cleavage complex H protein] + CO2. Its function is as follows. The glycine cleavage system catalyzes the degradation of glycine. The P protein binds the alpha-amino group of glycine through its pyridoxal phosphate cofactor; CO(2) is released and the remaining methylamine moiety is then transferred to the lipoamide cofactor of the H protein. This is Glycine dehydrogenase (decarboxylating) from Vibrio vulnificus (strain CMCP6).